Reading from the N-terminus, the 78-residue chain is Exodeoxyribonuclease 7 small subunit (78 aa).

The protein belongs to the XseB family. As to quaternary structure, heterooligomer composed of large and small subunits.

The protein resides in the cytoplasm. It catalyses the reaction Exonucleolytic cleavage in either 5'- to 3'- or 3'- to 5'-direction to yield nucleoside 5'-phosphates.. Functionally, bidirectionally degrades single-stranded DNA into large acid-insoluble oligonucleotides, which are then degraded further into small acid-soluble oligonucleotides. This Pediococcus pentosaceus (strain ATCC 25745 / CCUG 21536 / LMG 10740 / 183-1w) protein is Exodeoxyribonuclease 7 small subunit.